Consider the following 429-residue polypeptide: Putative chloride channel protein ClcB-like (429 aa).

11 consecutive transmembrane segments (helical) span residues 1–21 (MLAIAGLIGCAGALATIAFRE), 44–64 (LPWWARLLVPTAGGLLAGLTL), 146–166 (LLVACGAAAGITSAYNAPIAG), 168–188 (VFVCEIVFGAITTATLGPLLV), 200–220 (FFGYGAVYAMPHFDFVSGWEV), 221–241 (LTYLGLGLAAGMAGPLLLGLI), 259–279 (LALGGLIVGALSIRVPEVWGN), 283–303 (VVNGFLHAPWLWQTVALVLVC), 315–335 (GAVGGVFTPTLFCGAALGLLY), 354–376 (AVVGMGALLAATTHAPLMSILMI), and 383–405 (YQVVLPLMLACITGYVTAHATGA).

The protein belongs to the chloride channel (TC 2.A.49) family. ClcB subfamily.

It is found in the cell inner membrane. The protein is Putative chloride channel protein ClcB-like of Ralstonia nicotianae (strain ATCC BAA-1114 / GMI1000) (Ralstonia solanacearum).